We begin with the raw amino-acid sequence, 149 residues long: Inner membrane protein YfeZ (149 aa).

The Cytoplasmic portion of the chain corresponds to Met1–Arg18. Residues Leu19 to Ile39 traverse the membrane as a helical segment. Over Ala40–His58 the chain is Periplasmic. The chain crosses the membrane as a helical span at residues Asp59 to Gly79. At Arg80 to Arg89 the chain is on the cytoplasmic side. The chain crosses the membrane as a helical span at residues Val90–Trp110. Topologically, residues Leu111–Ser115 are periplasmic. The helical transmembrane segment at Val116 to Thr136 threads the bilayer. Over Asn137–Glu149 the chain is Cytoplasmic.

Its subcellular location is the cell inner membrane. The chain is Inner membrane protein YfeZ (yfeZ) from Escherichia coli (strain K12).